A 543-amino-acid chain; its full sequence is Protein male-specific lethal-3 (543 aa).

One can recognise a Chromo domain in the interval 10–90; it reads LFNRGEKVLC…KLQRELAEAA (81 aa). Residues 93–247 are disordered; it reads QKTGGYSYKD…THTTDAEKRI (155 aa). Composition is skewed to basic and acidic residues over residues 180-202, 210-224, and 234-247; these read RSRDGSGNRSRDGSGNRSRDNSS, KSKGGDKNDDGERRS, and SPKDTHTTDAEKRI. Residues 249–542 form the MRG domain; it reads QEDRVMLRIS…PLIDQGRELS (294 aa).

Component of the male-specific lethal (MSL) histone acetyltransferase complex, composed of mof, mle, msl-1, msl-2 and msl-3 proteins, as well as roX1 and roX2 non-coding RNAs. Post-translationally, ubiquitinated by msl-2.

It is found in the nucleus. It localises to the chromosome. Its function is as follows. Component of the male-specific lethal (MSL) histone acetyltransferase complex, a multiprotein complex essential for elevating transcription of the single X chromosome in the male (X chromosome dosage compensation). The MSL complex specifically associates with the single X chromosome in males and mediates formation of H4K16ac, promoting a two-fold activation of X chromosome. Acts as a histone reader that specifically recognizes and binds histone H3 trimethylated at 'Lys-36' (H3K36me3) and histone H4 monomethylated at 'Lys-20' (H4K20me1). Within the MSL complex, mediates the spreading of the MSL complex from initiation sites on the male X chromosome to flanking chromatin. Following initial recruitment of the MSL complex to male X chromosome by msl-2, msl-3 binds H3K36me3 and promotes spreading of the MSL complex in cis. In addition to its role in dosage compensation in males, promotes germline stem cell differentiation in females: recognizes and binds H3K36me3, promoting recruitment of the ATAC complex and transcription of genes, such as RpS19b. This Drosophila virilis (Fruit fly) protein is Protein male-specific lethal-3 (msl-3).